The sequence spans 1305 residues: Contactin-associated protein-like 5 (1305 aa).

The N-terminal stretch at 1–24 (MDSVPRLTGVFTLLLSGLWHLGSS) is a signal peptide. Over 25-1236 (ATNYNCDDPL…PLTNAVRSDS (1212 aa)) the chain is Extracellular. Residues 30–174 (CDDPLASLLS…IGMRVEVYGC (145 aa)) form the F5/8 type C domain. A disulfide bridge connects residues Cys30 and Cys174. 2 Laminin G-like domains span residues 180–360 (VADF…TFSC) and 367–544 (PITF…IDLC). N-linked (GlcNAc...) asparagine glycans are attached at residues Asn282, Asn355, and Asn496. A disulfide bridge links Cys329 with Cys360. Intrachain disulfides connect Cys512–Cys544, Cys550–Cys561, Cys555–Cys570, and Cys572–Cys582. Positions 546–583 (IKDRCLPNYCEHGGFCSQSWTTFYCNCSNTGYTGATCH) constitute an EGF-like 1 domain. The Fibrinogen C-terminal domain occupies 584-790 (NSLYEQSCEV…LRCYGDRHFW (207 aa)). N-linked (GlcNAc...) asparagine glycosylation occurs at Asn622. One can recognise a Laminin G-like 3 domain in the interval 791 to 956 (NAVSFYTEAS…KVTSGVRPGC (166 aa)). 5 disulfide bridges follow: Cys929/Cys956, Cys960/Cys973, Cys967/Cys982, Cys984/Cys994, and Cys1163/Cys1198. The 39-residue stretch at 957–995 (PGHCSTYGSICHNGGKCVEKYSGYFCDCTNSPYEGPFCK) folds into the EGF-like 2 domain. In terms of domain architecture, Laminin G-like 4 spans 1000 to 1198 (AVFEAGTSVT…VQGTLMESSC (199 aa)). The helical transmembrane segment at 1237–1257 (AVIGGVIAVVIFIIFSIIGIM) threads the bilayer. The Cytoplasmic portion of the chain corresponds to 1258–1305 (TRFLYQHKQSHRTNQMKEKEYPENLDSSFRNDIDLQNTVSECKREYFI).

This sequence belongs to the neurexin family.

It localises to the membrane. In terms of biological role, may play a role in the correct development and proper functioning of the peripheral and central nervous system and be involved in cell adhesion and intercellular communication. In Canis lupus familiaris (Dog), this protein is Contactin-associated protein-like 5 (CNTNAP5).